A 165-amino-acid chain; its full sequence is Minor capsid protein VP2 (165 aa).

Belongs to the sapovirus VP2 family. Homooligomer. The portal-like structure consists in 12 copies of VP2. Interacts with capsid protein VP1.

It localises to the virion. Its subcellular location is the host cytoplasm. Minor structural protein that forms a portal-like structure at a unique three-fold axis of symmetry, following binding to the host receptor. The channel formed by VP2 may allow the delivery of the viral genome through the host endosomal membrane. The chain is Minor capsid protein VP2 from Homo sapiens (Human).